The following is a 173-amino-acid chain: ATP synthase subunit b (173 aa).

A helical membrane pass occupies residues 15-35; it reads GVEWGTVIVQVLTFIVLLALL.

It belongs to the ATPase B chain family. F-type ATPases have 2 components, F(1) - the catalytic core - and F(0) - the membrane proton channel. F(1) has five subunits: alpha(3), beta(3), gamma(1), delta(1), epsilon(1). F(0) has three main subunits: a(1), b(2) and c(10-14). The alpha and beta chains form an alternating ring which encloses part of the gamma chain. F(1) is attached to F(0) by a central stalk formed by the gamma and epsilon chains, while a peripheral stalk is formed by the delta and b chains.

The protein resides in the cell membrane. Its function is as follows. F(1)F(0) ATP synthase produces ATP from ADP in the presence of a proton or sodium gradient. F-type ATPases consist of two structural domains, F(1) containing the extramembraneous catalytic core and F(0) containing the membrane proton channel, linked together by a central stalk and a peripheral stalk. During catalysis, ATP synthesis in the catalytic domain of F(1) is coupled via a rotary mechanism of the central stalk subunits to proton translocation. Functionally, component of the F(0) channel, it forms part of the peripheral stalk, linking F(1) to F(0). In Staphylococcus aureus (strain MSSA476), this protein is ATP synthase subunit b.